We begin with the raw amino-acid sequence, 133 residues long: S-protein homolog 21 (133 aa).

The N-terminal stretch at 1–21 (MKNLSIFLFVVGLCMISDVYG) is a signal peptide.

Belongs to the plant self-incompatibility (S1) protein family.

Its subcellular location is the secreted. This chain is S-protein homolog 21, found in Arabidopsis thaliana (Mouse-ear cress).